We begin with the raw amino-acid sequence, 491 residues long: MSLKSERRGIHVDQSELLCKKGCGYYGNPAWQGFCSKCWREEYHKARQRQIQEDWELAERLQREEEEAFASSQSSQGAQSLTFSKFEEKKTNEKTRKVTTVKKFFSASSRAGSKKEIQEAKAPSPSINRQTSIETDRVTKEFIDFLKTFHKTGQEVYKQTKMFLEAMPYKRDLSIEEQSECTQDFYQNVAERMQTRGKVPPEKVEKIMDQIEKHIMTRLYKFVFCPETTDDEKKDLAIQKRIRALHWVTPQMLCVPVNEEIPEVSDMVVKAITDIIEMDSKRVPRDKLACITRCSKHIFNAIKITKNEPASADDFLPTLIYIVLKGNPPRLQSNIQYITRFCNPSRLMTGEDGYYFTNLCCAVAFIEKLDAQSLNLSQEDFDRYMSGQTSPRKQESESWPPEACLGVKQMYKNLDLLSQLNERQERIMNEAKKLEKDLIDWTDGIAKEVQDIVEKYPLEIKPPNQPLAAIDSENVENDKLPPPLQPQVYAG.

The tract at residues 1–74 (MSLKSERRGI…EEEAFASSQS (74 aa)) is interaction with ubiquitinated proteins. An A20-type zinc finger spans residues 13-47 (DQSELLCKKGCGYYGNPAWQGFCSKCWREEYHKAR). C19, C23, C35, and C38 together coordinate Zn(2+). The segment at 66–85 (EEAFASSQSSQGAQSLTFSK) is disordered. A compositionally biased stretch (low complexity) spans 69 to 84 (FASSQSSQGAQSLTFS). 2 positions are modified to phosphoserine: S124 and S132. Residues K151 and K170 each carry the N6-acetyllysine modification. One can recognise a VPS9 domain in the interval 232 to 375 (EKKDLAIQKR…IEKLDAQSLN (144 aa)). 3 positions are modified to phosphoserine: S373, S377, and S390. Residues 407–448 (VKQMYKNLDLLSQLNERQERIMNEAKKLEKDLIDWTDGIAKE) adopt a coiled-coil conformation. A disordered region spans residues 462–491 (PPNQPLAAIDSENVENDKLPPPLQPQVYAG).

As to quaternary structure, heterodimer with RABEP1. The heterodimer binds RAB4A and RAB5A that have been activated by GTP-binding. Binds TSC2, GGA1, GGA2, GGA3, AP1G1 and AP1G2. Interacts with RAB21, and with 100-fold lower affinity also with RAB22. Interacts with ubiquitinated EGFR. Interacts with RGS14; the interaction is GTP-dependent. In terms of processing, monoubiquitinated. In terms of tissue distribution, expressed in the white matter tracts of the cerebellum, the fimbria hippocampi and the corpus callosum.

The protein localises to the cytoplasm. It is found in the early endosome. Its subcellular location is the recycling endosome. Rab effector protein acting as linker between gamma-adaptin, RAB4A or RAB5A. Involved in endocytic membrane fusion and membrane trafficking of recycling endosomes. Stimulates nucleotide exchange on RAB5A. Can act as a ubiquitin ligase. This Mus musculus (Mouse) protein is Rab5 GDP/GTP exchange factor (Rabgef1).